The following is a 417-amino-acid chain: uncharacterized protein (417 aa).

The disordered stretch occupies residues 1–24 (MSQPPINPLGQPQVPAAASPSGQP). 4 consecutive transmembrane segments (helical) span residues 54 to 74 (VYDT…LLTA), 79 to 99 (LMLY…TLLI), 117 to 137 (AIVV…GAFV), and 143 to 163 (MLVF…LYFM). Over residues 211–228 (DLSASARMEEHEASQRQD) the composition is skewed to basic and acidic residues. 2 disordered regions span residues 211-283 (DLSA…FKDD) and 308-417 (IMPA…RKNK). Residues 312–322 (SSRSPNFSTGT) are compositionally biased toward polar residues. The segment covering 336–347 (EPSIPRVSSSSR) has biased composition (low complexity). Residues 391-401 (STANLSPSNPF) are compositionally biased toward polar residues.

This sequence belongs to the chlamydial CPn_0443/CT_005/TC_0273 family.

It is found in the cell membrane. This is an uncharacterized protein from Chlamydia pneumoniae (Chlamydophila pneumoniae).